The sequence spans 283 residues: Probable endonuclease 4 (283 aa).

His-69, His-109, Glu-145, Asp-179, His-182, His-216, Asp-229, His-231, and Glu-261 together coordinate Zn(2+).

It belongs to the AP endonuclease 2 family. It depends on Zn(2+) as a cofactor.

It catalyses the reaction Endonucleolytic cleavage to 5'-phosphooligonucleotide end-products.. Endonuclease IV plays a role in DNA repair. It cleaves phosphodiester bonds at apurinic or apyrimidinic (AP) sites, generating a 3'-hydroxyl group and a 5'-terminal sugar phosphate. This chain is Probable endonuclease 4, found in Desulfosudis oleivorans (strain DSM 6200 / JCM 39069 / Hxd3) (Desulfococcus oleovorans).